Reading from the N-terminus, the 313-residue chain is Acetyl-coenzyme A carboxylase carboxyl transferase subunit alpha (313 aa).

One can recognise a CoA carboxyltransferase C-terminal domain in the interval 30-291 (DLDREISDLE…KMALLQELAF (262 aa)).

It belongs to the AccA family. Acetyl-CoA carboxylase is a heterohexamer composed of biotin carboxyl carrier protein (AccB), biotin carboxylase (AccC) and two subunits each of ACCase subunit alpha (AccA) and ACCase subunit beta (AccD).

It localises to the cytoplasm. The enzyme catalyses N(6)-carboxybiotinyl-L-lysyl-[protein] + acetyl-CoA = N(6)-biotinyl-L-lysyl-[protein] + malonyl-CoA. The protein operates within lipid metabolism; malonyl-CoA biosynthesis; malonyl-CoA from acetyl-CoA: step 1/1. Component of the acetyl coenzyme A carboxylase (ACC) complex. First, biotin carboxylase catalyzes the carboxylation of biotin on its carrier protein (BCCP) and then the CO(2) group is transferred by the carboxyltransferase to acetyl-CoA to form malonyl-CoA. In Zymomonas mobilis subsp. mobilis (strain ATCC 31821 / ZM4 / CP4), this protein is Acetyl-coenzyme A carboxylase carboxyl transferase subunit alpha.